Here is a 907-residue protein sequence, read N- to C-terminus: Protein translocase subunit SecA (907 aa).

ATP is bound by residues Gln87, Gly105–Thr109, and Asp512. The tract at residues Gln834–Ile907 is disordered. Basic and acidic residues-rich tracts occupy residues Asp836–Arg853 and Glu873–Arg888. 4 residues coordinate Zn(2+): Cys892, Cys894, Cys903, and His904. Basic residues predominate over residues Lys898–Ile907.

Belongs to the SecA family. As to quaternary structure, monomer and homodimer. Part of the essential Sec protein translocation apparatus which comprises SecA, SecYEG and auxiliary proteins SecDF-YajC and YidC. The cofactor is Zn(2+).

It is found in the cell inner membrane. Its subcellular location is the cytoplasm. The catalysed reaction is ATP + H2O + cellular proteinSide 1 = ADP + phosphate + cellular proteinSide 2.. In terms of biological role, part of the Sec protein translocase complex. Interacts with the SecYEG preprotein conducting channel. Has a central role in coupling the hydrolysis of ATP to the transfer of proteins into and across the cell membrane, serving both as a receptor for the preprotein-SecB complex and as an ATP-driven molecular motor driving the stepwise translocation of polypeptide chains across the membrane. This is Protein translocase subunit SecA from Aliivibrio fischeri (strain MJ11) (Vibrio fischeri).